We begin with the raw amino-acid sequence, 305 residues long: MVNVDEFIEEAKAEIAEEIGDKHAVIGLSGGVDSSTAAALAYEAIGDQLTAVYVDTGLMRKGETDEIRETFDYMDSLRIVEAQDRFLDELEGETDPEEKRHIIGEQFIREFETVAREVDADYLVQGTIYPDRIESEGTIKSHHNVGGLPERIDFDGIVEPMRDLYKDEVREVARALDLEEIISERMPFPGPGLAVRIIGEVTEEKLAVAREANHVVEEELEEYEPWQALAAVIGKATGVKGDNRVHGWVVAVRSVESRDGMTARAQELDWDTLQRMQSRITGAHENVARVVYDVTHKPPATIEYE.

The 184-residue stretch at 2–185 (VNVDEFIEEA…LDLEEIISER (184 aa)) folds into the GMPS ATP-PPase domain. 29 to 35 (SGGVDSS) provides a ligand contact to ATP.

Heterodimer composed of a glutamine amidotransferase subunit (A) and a GMP-binding subunit (B).

The enzyme catalyses XMP + L-glutamine + ATP + H2O = GMP + L-glutamate + AMP + diphosphate + 2 H(+). It functions in the pathway purine metabolism; GMP biosynthesis; GMP from XMP (L-Gln route): step 1/1. Functionally, catalyzes the synthesis of GMP from XMP. This Haloarcula marismortui (strain ATCC 43049 / DSM 3752 / JCM 8966 / VKM B-1809) (Halobacterium marismortui) protein is GMP synthase [glutamine-hydrolyzing] subunit B.